The following is a 341-amino-acid chain: MVGRVQPDRKQLPLVLLRLLCLLPTGLPVRSVDFNRGTDNITVRQGDTAILRCVVEDKNSKVAWLNRSGIIFAGHDKWSLDPRVELEKRHALEYSLRIQKVDVYDEGSYTCSVQTQHEPKTSQVYLIVQVPPKISNISSDVTVNEGSNVTLVCMANGRPEPVITWRHLTPLGREFEGEEEYLEILGITREQSGKYECKAANEVSSADVKQVKVTVNYPPTITESKSNEATTGRQASLKCEASAVPAPDFEWYRDDTRINSANGLEIKSTEGQSSLTVTNVTEEHYGNYTCVAANKLGVTNASLVLFSKYAKTEPDSMQVIEFLHIDLKSIRHPLKVNPIQK.

The N-terminal stretch at 1-28 (MVGRVQPDRKQLPLVLLRLLCLLPTGLP) is a signal peptide. Ig-like domains follow at residues 29–122 (VRSV…PKTS), 132–214 (PKIS…VKVT), and 219–304 (PTIT…ASLV). N-linked (GlcNAc...) asparagine glycans are attached at residues Asn40 and Asn66. Cys53 and Cys111 are joined by a disulfide. Tyr94 carries the post-translational modification Phosphotyrosine. 2 N-linked (GlcNAc...) asparagine glycosylation sites follow: Asn136 and Asn148. Cystine bridges form between Cys153-Cys197 and Cys239-Cys290. Asn279, Asn287, and Asn300 each carry an N-linked (GlcNAc...) asparagine glycan.

Belongs to the immunoglobulin superfamily. IgLON family.

Its subcellular location is the cell membrane. Its function is as follows. Mediates selective neuronal growth and axon targeting. Contributes to the guidance of developing axons and remodeling of mature circuits in the limbic system. Essential for normal growth of the hippocampal mossy fiber projection. The sequence is that of Limbic system-associated membrane protein (Lsamp) from Mus musculus (Mouse).